The primary structure comprises 76 residues: DNA-directed RNA polymerase subunit epsilon (76 aa).

Belongs to the RNA polymerase subunit epsilon family. As to quaternary structure, RNAP is composed of a core of 2 alpha, a beta and a beta' subunit. The core is associated with a delta subunit, and at least one of epsilon or omega. When a sigma factor is associated with the core the holoenzyme is formed, which can initiate transcription.

The enzyme catalyses RNA(n) + a ribonucleoside 5'-triphosphate = RNA(n+1) + diphosphate. Its function is as follows. A non-essential component of RNA polymerase (RNAP). The sequence is that of DNA-directed RNA polymerase subunit epsilon from Streptococcus gordonii (strain Challis / ATCC 35105 / BCRC 15272 / CH1 / DL1 / V288).